The sequence spans 572 residues: Phosphoenolpyruvate-protein phosphotransferase (572 aa).

The active-site Tele-phosphohistidine intermediate is the histidine 191. 2 residues coordinate phosphoenolpyruvate: arginine 298 and arginine 334. Residues glutamate 433 and aspartate 457 each coordinate Mg(2+). Phosphoenolpyruvate is bound by residues 456 to 457 and arginine 467; that span reads ND. Residue cysteine 504 is the Proton donor of the active site.

This sequence belongs to the PEP-utilizing enzyme family. Homodimer. Requires Mg(2+) as cofactor.

The protein resides in the cytoplasm. The enzyme catalyses L-histidyl-[protein] + phosphoenolpyruvate = N(pros)-phospho-L-histidyl-[protein] + pyruvate. General (non sugar-specific) component of the phosphoenolpyruvate-dependent sugar phosphotransferase system (sugar PTS). This major carbohydrate active-transport system catalyzes the phosphorylation of incoming sugar substrates concomitantly with their translocation across the cell membrane. Enzyme I transfers the phosphoryl group from phosphoenolpyruvate (PEP) to the phosphoryl carrier protein (HPr). The chain is Phosphoenolpyruvate-protein phosphotransferase (ptsI) from Staphylococcus epidermidis (strain ATCC 35984 / DSM 28319 / BCRC 17069 / CCUG 31568 / BM 3577 / RP62A).